The sequence spans 229 residues: Uridylate cyclase (229 aa).

The Guanylate cyclase domain occupies 47–178 (TVLYADLDGS…RAANYAAKLT (132 aa)). Residue tyrosine 50 participates in a ribonucleoside 5'-triphosphate binding. Mn(2+)-binding residues include aspartate 52 and aspartate 96. Arginine 97 serves as a coordination point for a ribonucleoside 5'-triphosphate.

This sequence belongs to the adenylyl cyclase class-4/guanylyl cyclase family. Pyrimidine cyclase subfamily. In terms of assembly, homodimer. Mn(2+) serves as cofactor.

The protein localises to the cytoplasm. It catalyses the reaction UTP = 3',5'-cyclic UMP + diphosphate. Functionally, pycsar (pyrimidine cyclase system for antiphage resistance) provides immunity against bacteriophage. The pyrimidine cyclase (PycC) synthesizes cyclic nucleotides in response to infection; these serve as specific second messenger signals. The signals activate the adjacent effector, leading to bacterial cell death and abortive phage infection. A clade B Pycsar system. The pyrimidine cyclase gene of a two-gene Pycsar system, generates cyclic UMP (cUMP) from UTP, has little to no activity on ATP, CTP or GTP. Expression of this and adjacent effector BcPycTIR (AC A0A0J5WTU0) probably confers resistance to bacteriophage. The genes are probably only expressed in response to bacteriophage infection. The chain is Uridylate cyclase from Burkholderia cepacia (Pseudomonas cepacia).